The following is a 503-amino-acid chain: Portal protein (503 aa).

The segment at 463–503 (EMNQYAEMQGNLLDDEGGDDDLEEDDPNAGAAESGGAGQVS) is disordered. Acidic residues predominate over residues 475 to 489 (LDDEGGDDDLEEDDP).

This sequence belongs to the SPP1-like portal protein family. In terms of assembly, homododecamer. Has been seen as 13-mer and 14-mer multimer in experiments, but assembles as homododecamer in vivo. Interacts with the gp7 protein. Interacts with the connector proteins gp15; this interaction occurs at the end of the packaging when the terminase complex is replaced by the connector.

The protein resides in the virion. Forms the portal vertex of the capsid. This portal plays critical roles in head assembly, genome packaging, neck/tail attachment, and genome ejection. The portal protein multimerizes as a single ring-shaped homododecamer arranged around a central channel. Binds to the terminase subunits to form the packaging machine. Necessary to ensure correct procapsid size during capsid assembly. Once the capsid is packaged with the DNA, the terminase complex is substituted by the connector proteins gp15. This Bacillus phage SPP1 (Bacteriophage SPP1) protein is Portal protein (6).